A 344-amino-acid polypeptide reads, in one-letter code: 4'-phosphopantetheinyl transferase NpgA (344 aa).

The protein belongs to the P-Pant transferase superfamily.

The catalysed reaction is apo-[ACP] + CoA = holo-[ACP] + adenosine 3',5'-bisphosphate + H(+). In terms of biological role, transfers the 4'-phosphopantetheine moiety from coenzyme A to a Ser of an acyl-carrier-protein. The enzyme is able to transfer the cofactor to a broad range of enzymes with acyl- or peptidyl-carrier protein domains. Required for primary biological processes such as growth and asexual/sexual development, and activates target enzymes involved in the synthesis of metabolites such as fatty acids, polyketides and nonribosomal peptides, lysine, siderophore, penicillin, sterigmatocystin, shamixantone, dehydroaustinol, and pigments. This is 4'-phosphopantetheinyl transferase NpgA (npgA) from Emericella nidulans (strain FGSC A4 / ATCC 38163 / CBS 112.46 / NRRL 194 / M139) (Aspergillus nidulans).